Consider the following 560-residue polypeptide: Potassium-transporting ATPase potassium-binding subunit (560 aa).

Transmembrane regions (helical) follow at residues 6–26 (FLLIASFLLVLMALAKPLGSL), 63–83 (LLAILLFNTLGLVLLFAILMC), 132–152 (GLAVQNFLSAATGIAVAFALI), 175–195 (LWVLMPISLIIALFFIQQGAI), 250–270 (LTNVVQMLAIFLIPAALCFAF), 282–302 (AILWTMTVIFVVCVALVMWAE), 327–347 (FGILASSLFAVVTTAASCGAV), 356–376 (ALGGMIPMWLMQIGEVVFGGV), 379–399 (GLYGMLLFVLLGVFIAGLMIG), 416–436 (MTALAILVTPALVLLGTALAM), 483–503 (LLLAFCMWFGRFLVIIPVMAI), and 524–544 (GALFIGLLTGTVLLVGALTFI).

It belongs to the KdpA family. The system is composed of three essential subunits: KdpA, KdpB and KdpC.

It is found in the cell inner membrane. In terms of biological role, part of the high-affinity ATP-driven potassium transport (or Kdp) system, which catalyzes the hydrolysis of ATP coupled with the electrogenic transport of potassium into the cytoplasm. This subunit binds the periplasmic potassium ions and delivers the ions to the membrane domain of KdpB through an intramembrane tunnel. This Cronobacter sakazakii (strain ATCC BAA-894) (Enterobacter sakazakii) protein is Potassium-transporting ATPase potassium-binding subunit.